The sequence spans 338 residues: Glycerol-3-phosphate dehydrogenase [NAD(P)+] (338 aa).

4 residues coordinate NADPH: serine 18, tyrosine 19, histidine 39, and lysine 113. The sn-glycerol 3-phosphate site is built by lysine 113, glycine 142, and threonine 144. Alanine 146 serves as a coordination point for NADPH. Sn-glycerol 3-phosphate is bound by residues lysine 198, aspartate 251, serine 261, arginine 262, and asparagine 263. The active-site Proton acceptor is lysine 198. Arginine 262 provides a ligand contact to NADPH. Positions 286 and 288 each coordinate NADPH.

It belongs to the NAD-dependent glycerol-3-phosphate dehydrogenase family.

It is found in the cytoplasm. The enzyme catalyses sn-glycerol 3-phosphate + NAD(+) = dihydroxyacetone phosphate + NADH + H(+). The catalysed reaction is sn-glycerol 3-phosphate + NADP(+) = dihydroxyacetone phosphate + NADPH + H(+). Its pathway is membrane lipid metabolism; glycerophospholipid metabolism. Its function is as follows. Catalyzes the reduction of the glycolytic intermediate dihydroxyacetone phosphate (DHAP) to sn-glycerol 3-phosphate (G3P), the key precursor for phospholipid synthesis. In Photobacterium profundum (strain SS9), this protein is Glycerol-3-phosphate dehydrogenase [NAD(P)+].